A 531-amino-acid polypeptide reads, in one-letter code: Flavin-containing monooxygenase 3 (531 aa).

Residues 9–13 (GAGVS), Glu-32, 40–41 (LW), and 61–62 (NS) each bind FAD. NADP(+) is bound by residues 60–61 (TN) and 195–198 (SGCD). A Phosphoserine modification is found at Ser-401. The helical transmembrane segment at 511 to 531 (YSHFLRLLAVPVLIALFLVLI) threads the bilayer.

The protein belongs to the FMO family. It depends on FAD as a cofactor. Detected in liver and kidney (at protein level). Expressed in kidney and liver. Weakly expressed in lung. Does not seem to be expressed in brain, adipose tissue, or muscle.

It localises to the microsome membrane. The protein resides in the endoplasmic reticulum membrane. It catalyses the reaction trimethylamine + NADPH + O2 = trimethylamine N-oxide + NADP(+) + H2O. The enzyme catalyses N,N-dimethylaniline + NADPH + O2 + H(+) = N,N-dimethylaniline N-oxide + NADP(+) + H2O. It carries out the reaction hypotaurine + NADPH + O2 + H(+) = taurine + NADP(+) + H2O. The catalysed reaction is (S)-nicotine + NADPH + O2 = trans-(S)-nicotine N(1')-oxide + NADP(+) + H2O. It catalyses the reaction albendazole + NADPH + O2 + H(+) = albendazole S-oxide + NADP(+) + H2O. Its function is as follows. Essential hepatic enzyme that catalyzes the oxygenation of a wide variety of nitrogen- and sulfur-containing compounds including drugs as well as dietary compounds. Plays an important role in the metabolism of trimethylamine (TMA), via the production of trimethylamine N-oxide (TMAO) metabolite. TMA is generated by the action of gut microbiota using dietary precursors such as choline, choline containing compounds, betaine or L-carnitine. By regulating TMAO concentration, FMO3 directly impacts both platelet responsiveness and rate of thrombus formation. This is Flavin-containing monooxygenase 3 (Fmo3) from Rattus norvegicus (Rat).